Consider the following 147-residue polypeptide: Globin, major monomeric component (147 aa).

The region spanning 1–146 (GLSAAQRQVI…ISGALISGLQ (146 aa)) is the Globin domain. His-90 provides a ligand contact to heme b.

It belongs to the globin family. As to quaternary structure, monomer.

The chain is Globin, major monomeric component from Glycera dibranchiata (Bloodworm).